Reading from the N-terminus, the 247-residue chain is Ubiquinone biosynthesis O-methyltransferase (247 aa).

Residues Arg-40, Gly-71, Asp-92, and Met-135 each coordinate S-adenosyl-L-methionine.

The protein belongs to the methyltransferase superfamily. UbiG/COQ3 family.

It carries out the reaction a 3-demethylubiquinol + S-adenosyl-L-methionine = a ubiquinol + S-adenosyl-L-homocysteine + H(+). The enzyme catalyses a 3-(all-trans-polyprenyl)benzene-1,2-diol + S-adenosyl-L-methionine = a 2-methoxy-6-(all-trans-polyprenyl)phenol + S-adenosyl-L-homocysteine + H(+). The protein operates within cofactor biosynthesis; ubiquinone biosynthesis. Functionally, O-methyltransferase that catalyzes the 2 O-methylation steps in the ubiquinone biosynthetic pathway. In Ruegeria sp. (strain TM1040) (Silicibacter sp.), this protein is Ubiquinone biosynthesis O-methyltransferase.